The sequence spans 1215 residues: RNA-dependent RNA polymerase 1 (1215 aa).

The protein belongs to the RdRP family. Cid12, hrr1 and rdp1 interact forming the RNA-directed RNA polymerase complex (RDRC). The RDRC complex interacts with the RITS complex via interaction between ago1 and hrr1. Clr4 has a role in mediating this interaction.

It localises to the cytoplasm. The protein localises to the nucleus. Its subcellular location is the chromosome. The protein resides in the telomere. It is found in the centromere. It catalyses the reaction RNA(n) + a ribonucleoside 5'-triphosphate = RNA(n+1) + diphosphate. Functionally, has a role in the RNA interference (RNAi) pathway which is important for heterochromatin formation, accurate chromosome segregation, centromere cohesion and telomere function during mitosis and meiosis. Required for both post-transcriptional and transcriptional gene silencing. Required for silencing at the centromeres and for initiation of transcriptionally silent heterochromatin at the mating type locus. Promotes histone H3 'Lys-10' methylation necessary for centromere function. Required for recruitment of swi6 and cohesin to an ectopic dg repeat. A member of the RNA-directed RNA polymerase complex (RDRC) which is involved in the generation of small interfering RNAs (siRNAs) and mediates their association with the RNA-induced transcriptional silencing (RITS) complex. RITS acts as a priming complex for dsRNA synthesis at the site of non-coding centromeric RNA. Its RNA-dependent RNA polymerase activity is critical in siRNA production necessary for heterochromatin formation. The protein is RNA-dependent RNA polymerase 1 (rdp1) of Schizosaccharomyces pombe (strain 972 / ATCC 24843) (Fission yeast).